The sequence spans 277 residues: Putative pyruvate, phosphate dikinase regulatory protein (277 aa).

156–163 (GVSRTSKT) contributes to the ADP binding site.

It belongs to the pyruvate, phosphate/water dikinase regulatory protein family. PDRP subfamily.

It catalyses the reaction N(tele)-phospho-L-histidyl/L-threonyl-[pyruvate, phosphate dikinase] + ADP = N(tele)-phospho-L-histidyl/O-phospho-L-threonyl-[pyruvate, phosphate dikinase] + AMP + H(+). The enzyme catalyses N(tele)-phospho-L-histidyl/O-phospho-L-threonyl-[pyruvate, phosphate dikinase] + phosphate + H(+) = N(tele)-phospho-L-histidyl/L-threonyl-[pyruvate, phosphate dikinase] + diphosphate. Functionally, bifunctional serine/threonine kinase and phosphorylase involved in the regulation of the pyruvate, phosphate dikinase (PPDK) by catalyzing its phosphorylation/dephosphorylation. The sequence is that of Putative pyruvate, phosphate dikinase regulatory protein from Carboxydothermus hydrogenoformans (strain ATCC BAA-161 / DSM 6008 / Z-2901).